An 837-amino-acid polypeptide reads, in one-letter code: Striatin-interacting protein 1 (837 aa).

Position 1 is an N-acetylmethionine (M1). Disordered stretches follow at residues 1–67 (MEPA…ESPD) and 333–423 (AASP…KGLP). Residues 18–35 (PQPPPPPPPATAQPPPGA) show a composition bias toward pro residues. A compositionally biased stretch (basic and acidic residues) spans 47-60 (KAREFNRNQRKDSE). Phosphoserine is present on residues S59, S335, and S339. A compositionally biased stretch (basic and acidic residues) spans 356 to 377 (KALIKQDNLDAFNERDPYKADD). Over residues 378-391 (SREEEEENDDDSSL) the composition is skewed to acidic residues. S788 carries the post-translational modification Phosphoserine. The segment at 796 to 837 (DNCLQSVLGQRVDLPEDFQMNYDLWLEREVFSKPISWEELLQ) is required for STRIPAK core complex formation.

The protein belongs to the STRIP family. As to quaternary structure, part of the core of STRIPAK complexes composed of PP2A catalytic and scaffolding subunits, the striatins (PP2A regulatory subunits), the striatin-associated proteins MOB4, STRIP1 and STRIP2, PDCD10 and members of the STE20 kinases, such as STK24 and STK26. The STRIPAK complex can be extended by adapter proteins such as SLMAP:SIKE1, CTTNBP2 or CTTNBP2NL. Interacts with CDC42BPB. Interacts with CTTNBP2NL.

The protein localises to the cytoplasm. Functionally, plays a role in the regulation of cell morphology and cytoskeletal organization. Required in the cortical actin filament dynamics and cell shape. Part of the striatin-interacting phosphatase and kinase (STRIPAK) complexes. STRIPAK complexes have critical roles in protein (de)phosphorylation and are regulators of multiple signaling pathways including Hippo, MAPK, nuclear receptor and cytoskeleton remodeling. Different types of STRIPAK complexes are involved in a variety of biological processes such as cell growth, differentiation, apoptosis, metabolism and immune regulation. The protein is Striatin-interacting protein 1 (Strip1) of Mus musculus (Mouse).